We begin with the raw amino-acid sequence, 385 residues long: 4-hydroxy-3-methylbut-2-en-1-yl diphosphate synthase (flavodoxin) (385 aa).

4 residues coordinate [4Fe-4S] cluster: cysteine 282, cysteine 285, cysteine 317, and glutamate 324.

Belongs to the IspG family. The cofactor is [4Fe-4S] cluster.

The catalysed reaction is (2E)-4-hydroxy-3-methylbut-2-enyl diphosphate + oxidized [flavodoxin] + H2O + 2 H(+) = 2-C-methyl-D-erythritol 2,4-cyclic diphosphate + reduced [flavodoxin]. It participates in isoprenoid biosynthesis; isopentenyl diphosphate biosynthesis via DXP pathway; isopentenyl diphosphate from 1-deoxy-D-xylulose 5-phosphate: step 5/6. In terms of biological role, converts 2C-methyl-D-erythritol 2,4-cyclodiphosphate (ME-2,4cPP) into 1-hydroxy-2-methyl-2-(E)-butenyl 4-diphosphate. This chain is 4-hydroxy-3-methylbut-2-en-1-yl diphosphate synthase (flavodoxin), found in Nocardia farcinica (strain IFM 10152).